A 173-amino-acid chain; its full sequence is Photosystem I assembly protein Ycf3 (173 aa).

TPR repeat units follow at residues 35 to 68 (AYLY…EDNQ), 72 to 105 (GETL…NPKQ), and 120 to 153 (GRMA…YPGG).

This sequence belongs to the Ycf3 family.

It is found in the cellular thylakoid membrane. Functionally, essential for the assembly of the photosystem I (PSI) complex. May act as a chaperone-like factor to guide the assembly of the PSI subunits. The polypeptide is Photosystem I assembly protein Ycf3 (Prochlorococcus marinus (strain NATL1A)).